The primary structure comprises 338 residues: Anthranilate phosphoribosyltransferase (338 aa).

Residues Gly81, 84–85, Thr89, 91–94, 109–117, and Ser121 contribute to the 5-phospho-alpha-D-ribose 1-diphosphate site; these read GD, NVST, and KHGNRSVSS. Gly81 is a binding site for anthranilate. Ser93 is a binding site for Mg(2+). Asn112 serves as a coordination point for anthranilate. Arg167 serves as a coordination point for anthranilate. Mg(2+) is bound by residues Asp226 and Glu227.

It belongs to the anthranilate phosphoribosyltransferase family. Homodimer. Mg(2+) is required as a cofactor.

It carries out the reaction N-(5-phospho-beta-D-ribosyl)anthranilate + diphosphate = 5-phospho-alpha-D-ribose 1-diphosphate + anthranilate. It functions in the pathway amino-acid biosynthesis; L-tryptophan biosynthesis; L-tryptophan from chorismate: step 2/5. Its function is as follows. Catalyzes the transfer of the phosphoribosyl group of 5-phosphorylribose-1-pyrophosphate (PRPP) to anthranilate to yield N-(5'-phosphoribosyl)-anthranilate (PRA). The sequence is that of Anthranilate phosphoribosyltransferase from Alkalilimnicola ehrlichii (strain ATCC BAA-1101 / DSM 17681 / MLHE-1).